The following is a 416-amino-acid chain: MIWTLAPFVALLPLVTAQQVGTTADAHPRLTTYKCTSQNGCTRQNTSVVLDAATHFIHKKGTQTSCTNSNGLDTAICPDKQTCADNCVVDGITDYASYGVQTKNDTLTLQQYLQTGNATKSLSPRVYLLAEDGENYSMLKLLNQEFTFDVDASTLVCGMNGALYLSEMEASGGKSSLNQAGAKYGTGYCDAQCYTTPWINGEGNTESVGSCCQEMDIWEANARATGLTPHPCNTTGLYECSGSGCGDSGVCDKAGCGFNPYGLGAKDYYGYGLKVNTNETFTVVTQFLTNDNTTSGQLSEIRRLYIQNGQVIQNAAVTSGGKTVDSITKDFCSGEGSAFNRLGGLEEMGHALGRGMVLALSIWNDAGSFMQWLDGGSAGPCNATEGNPALIEKLYPDTHVKFSKIRWGDIGSTYRH.

Residues 1 to 17 form the signal peptide; sequence MIWTLAPFVALLPLVTA. N-linked (GlcNAc...) asparagine glycans are attached at residues Asn-45, Asn-104, Asn-117, and Asn-135. The Nucleophile role is filled by Glu-214. The active-site Proton donor is Glu-219. Residues Asn-233, Asn-278, Asn-292, and Asn-382 are each glycosylated (N-linked (GlcNAc...) asparagine).

This sequence belongs to the glycosyl hydrolase 7 (cellulase C) family.

It is found in the secreted. It catalyses the reaction Endohydrolysis of (1-&gt;4)-beta-D-glucosidic linkages in cellulose, lichenin and cereal beta-D-glucans.. Its function is as follows. Has endoglucanase activity on substrates containing beta-1,4 glycosidic bonds, like in carboxymethylcellulose (CMC), hydroxyethylcellulose (HEC) and beta-glucan. Involved in the degradation of complex natural cellulosic substrates. The protein is Probable endo-beta-1,4-glucanase celB (celB) of Aspergillus flavus (strain ATCC 200026 / FGSC A1120 / IAM 13836 / NRRL 3357 / JCM 12722 / SRRC 167).